The sequence spans 97 residues: Eotaxin (97 aa).

Residues 1 to 23 form the signal peptide; the sequence is MQLSTALLFLLLTATSFTSQVLA. Intrachain disulfides connect Cys32–Cys57 and Cys33–Cys73. Thr94 carries an O-linked (GalNAc...) threonine glycan.

It belongs to the intercrine beta (chemokine CC) family.

It localises to the secreted. In terms of biological role, in response to the presence of allergens, this protein directly promotes the accumulation of eosinophils (a prominent feature of allergic inflammatory reactions), but not lymphocytes, macrophages or neutrophils. Binds to CCR3. This chain is Eotaxin (Ccl11), found in Rattus norvegicus (Rat).